A 207-amino-acid chain; its full sequence is 3,4-dihydroxy-2-butanone 4-phosphate synthase (207 aa).

D-ribulose 5-phosphate-binding positions include 28–29 (RE), Asp33, 140–144 (RRGHT), and Glu164. Glu29 serves as a coordination point for Mg(2+). Position 143 (His143) interacts with Mg(2+).

It belongs to the DHBP synthase family. Homodimer. It depends on Mg(2+) as a cofactor. Mn(2+) serves as cofactor.

It catalyses the reaction D-ribulose 5-phosphate = (2S)-2-hydroxy-3-oxobutyl phosphate + formate + H(+). It functions in the pathway cofactor biosynthesis; riboflavin biosynthesis; 2-hydroxy-3-oxobutyl phosphate from D-ribulose 5-phosphate: step 1/1. Its function is as follows. Catalyzes the conversion of D-ribulose 5-phosphate to formate and 3,4-dihydroxy-2-butanone 4-phosphate. This Oceanobacillus iheyensis (strain DSM 14371 / CIP 107618 / JCM 11309 / KCTC 3954 / HTE831) protein is 3,4-dihydroxy-2-butanone 4-phosphate synthase.